A 485-amino-acid polypeptide reads, in one-letter code: Argininosuccinate lyase (485 aa).

This sequence belongs to the lyase 1 family. Argininosuccinate lyase subfamily.

Its subcellular location is the cytoplasm. The catalysed reaction is 2-(N(omega)-L-arginino)succinate = fumarate + L-arginine. It functions in the pathway amino-acid biosynthesis; L-arginine biosynthesis; L-arginine from L-ornithine and carbamoyl phosphate: step 3/3. The protein is Argininosuccinate lyase of Halobacterium salinarum (strain ATCC 29341 / DSM 671 / R1).